The primary structure comprises 171 residues: Putative charged multivesicular body protein 4B-like protein CHMP4BP1 (171 aa).

Residues 1 to 17 (MLSKKQEFLEKKIEQRH) show a composition bias toward basic and acidic residues. Disordered stretches follow at residues 1–24 (MLSK…NKPA) and 132–171 (EQEE…KTTT).

The protein belongs to the SNF7 family.

This Homo sapiens (Human) protein is Putative charged multivesicular body protein 4B-like protein CHMP4BP1 (CHMP4BP1).